A 446-amino-acid chain; its full sequence is Glutamyl-tRNA reductase 2 (446 aa).

Substrate-binding positions include 53-56 (TCNR), S105, 110-112 (EQQ), and Q116. Residue C54 is the Nucleophile of the active site. 185-190 (GAGKMG) contributes to the NADP(+) binding site. The disordered stretch occupies residues 409–446 (AAELFGIENETAGGERREGGAEGAAAAPGAGPVRSQGT). The span at 431–440 (GAAAAPGAGP) shows a compositional bias: low complexity.

The protein belongs to the glutamyl-tRNA reductase family. As to quaternary structure, homodimer.

The catalysed reaction is (S)-4-amino-5-oxopentanoate + tRNA(Glu) + NADP(+) = L-glutamyl-tRNA(Glu) + NADPH + H(+). It participates in porphyrin-containing compound metabolism; protoporphyrin-IX biosynthesis; 5-aminolevulinate from L-glutamyl-tRNA(Glu): step 1/2. Catalyzes the NADPH-dependent reduction of glutamyl-tRNA(Glu) to glutamate 1-semialdehyde (GSA). This is Glutamyl-tRNA reductase 2 from Anaeromyxobacter dehalogenans (strain 2CP-C).